A 544-amino-acid chain; its full sequence is Protein RDR1 (544 aa).

Residues Cys14–Cys40 constitute a DNA-binding region (zn(2)-C6 fungal-type). The segment at Lys50–Asp71 is disordered.

The protein resides in the nucleus. Functionally, may act as a transcriptional repressor of multidrug resistance genes. In Gibberella zeae (strain ATCC MYA-4620 / CBS 123657 / FGSC 9075 / NRRL 31084 / PH-1) (Wheat head blight fungus), this protein is Protein RDR1 (RDR1).